The chain runs to 472 residues: Pentatricopeptide repeat-containing protein At3g18970 (472 aa).

8 PPR repeats span residues 107–139 (NERTFVFVLGACARSASSSALRVGRIVHGMVKK), 146–180 (SELIGTTLLHFYAKNGDLRYARKVFDEMPERTSVT), 181–216 (WNAMIGGYCSHKDKGNHNARKAMVLFRRFSCCGSGV), 219–253 (TDTTMVCVLSAISQTGLLEIGSLVHGYIEKLGFTP), 256–286 (DVFIGTALVDMYSKCGCLNNAFSVFELMKVK), 287–321 (NVFTWTSMATGLALNGRGNETPNLLNRMAESGIKP), 322–352 (NEITFTSLLSAYRHIGLVEEGIELFKSMKTR), and 358–388 (VIEHYGCIVDLLGKAGRIQEAYQFILAMPIK). The tract at residues 393–472 (LLRSLCNACS…IKTRPGYSFV (80 aa)) is type E motif; degenerate.

The protein belongs to the PPR family. PCMP-E subfamily.

The protein is Pentatricopeptide repeat-containing protein At3g18970 (PCMP-E93) of Arabidopsis thaliana (Mouse-ear cress).